Reading from the N-terminus, the 144-residue chain is MNFKYIVAVSFLIASAYARSEENDEQSLSQRDVLEEESLREIRGIGAKILGGVKTALKGALKELASTYVNGKRTAEDHEVMKRLEAVMRDLDSLDYPEEAAERETRGFNQEEIANLFTKKEKRILGPVISTIGGVLGGLLKNLG.

The N-terminal stretch at 1-18 is a signal peptide; it reads MNFKYIVAVSFLIASAYA. The propeptide occupies 19 to 43; the sequence is RSEENDEQSLSQRDVLEEESLREIR. Residue Asn-70 is modified to Asparagine amide. A propeptide spanning residues 74–123 is cleaved from the precursor; sequence TAEDHEVMKRLEAVMRDLDSLDYPEEAAERETRGFNQEEIANLFTKKEKR. Leucine amide is present on Leu-143.

The protein belongs to the bombinin family. Expressed by the skin glands.

The protein localises to the secreted. Its function is as follows. Maximin-7 shows antimicrobial activity against bacteria and against the fungus C.albicans. It has little hemolytic activity. Maximin-H1 shows antibacterial activity against both Gram-positive and Gram-negative bacteria. It also shows antimicrobial activity against the fungus C.albicans. Shows strong hemolytic activity. This is Maximins 7/H1 from Bombina maxima (Giant fire-bellied toad).